A 193-amino-acid chain; its full sequence is Cytidylate kinase (193 aa).

An ATP-binding site is contributed by 12-20 (GLAGSGTTT).

It belongs to the cytidylate kinase family. Type 2 subfamily.

The protein localises to the cytoplasm. The enzyme catalyses CMP + ATP = CDP + ADP. The catalysed reaction is dCMP + ATP = dCDP + ADP. The chain is Cytidylate kinase from Thermococcus sibiricus (strain DSM 12597 / MM 739).